The primary structure comprises 135 residues: Transcription antitermination protein NusB (135 aa).

This sequence belongs to the NusB family.

In terms of biological role, involved in transcription antitermination. Required for transcription of ribosomal RNA (rRNA) genes. Binds specifically to the boxA antiterminator sequence of the ribosomal RNA (rrn) operons. This is Transcription antitermination protein NusB from Bdellovibrio bacteriovorus (strain ATCC 15356 / DSM 50701 / NCIMB 9529 / HD100).